A 1040-amino-acid polypeptide reads, in one-letter code: DIS3-like exonuclease 1 (1040 aa).

Residues 232–310 enclose the CSD1 domain; sequence AGIKSGRYKQ…KGRTGALCEN (79 aa). Residues 360–426 form the CSD2 domain; it reads VLVMPWDYRI…AEIATILVEN (67 aa). The RNB domain occupies 459–808; it reads RLDLRETHLV…VHRLLLAAVN (350 aa).

The protein belongs to the RNR ribonuclease family. Component of the RNA exosome complex. Requires Mg(2+) as cofactor.

The protein localises to the cytoplasm. The catalysed reaction is Exonucleolytic cleavage in the 3'- to 5'-direction to yield nucleoside 5'-phosphates.. Its function is as follows. Catalytic component of the RNA exosome complex which has 3'-&gt;5' exoribonuclease activity and participates in a multitude of cellular RNA processing and degradation events. This Xenopus laevis (African clawed frog) protein is DIS3-like exonuclease 1 (dis3l).